A 379-amino-acid chain; its full sequence is Queuine tRNA-ribosyltransferase (379 aa).

The active-site Proton acceptor is the Asp-89. Substrate is bound by residues 89–93 (DSGGF), Asp-143, Gln-187, and Gly-214. The RNA binding stretch occupies residues 245 to 251 (GVGKPED). Asp-264 serves as the catalytic Nucleophile. The interval 269 to 273 (TRNAR) is RNA binding; important for wobble base 34 recognition. Zn(2+)-binding residues include Cys-302, Cys-304, Cys-307, and His-333.

The protein belongs to the queuine tRNA-ribosyltransferase family. As to quaternary structure, homodimer. Within each dimer, one monomer is responsible for RNA recognition and catalysis, while the other monomer binds to the replacement base PreQ1. Zn(2+) serves as cofactor.

The enzyme catalyses 7-aminomethyl-7-carbaguanine + guanosine(34) in tRNA = 7-aminomethyl-7-carbaguanosine(34) in tRNA + guanine. It functions in the pathway tRNA modification; tRNA-queuosine biosynthesis. Its function is as follows. Catalyzes the base-exchange of a guanine (G) residue with the queuine precursor 7-aminomethyl-7-deazaguanine (PreQ1) at position 34 (anticodon wobble position) in tRNAs with GU(N) anticodons (tRNA-Asp, -Asn, -His and -Tyr). Catalysis occurs through a double-displacement mechanism. The nucleophile active site attacks the C1' of nucleotide 34 to detach the guanine base from the RNA, forming a covalent enzyme-RNA intermediate. The proton acceptor active site deprotonates the incoming PreQ1, allowing a nucleophilic attack on the C1' of the ribose to form the product. After dissociation, two additional enzymatic reactions on the tRNA convert PreQ1 to queuine (Q), resulting in the hypermodified nucleoside queuosine (7-(((4,5-cis-dihydroxy-2-cyclopenten-1-yl)amino)methyl)-7-deazaguanosine). This is Queuine tRNA-ribosyltransferase from Edwardsiella ictaluri (strain 93-146).